The primary structure comprises 225 residues: Rho GDP-dissociation inhibitor 3 (225 aa).

Belongs to the Rho GDI family. As to expression, primarily expressed in pancreas and brain.

The protein localises to the cytoplasm. Its function is as follows. Inhibits GDP/GTP exchange reaction of RhoB. Interacts specifically with the GDP- and GTP-bound forms of post-translationally processed Rhob and Rhog proteins, both of which show a growth-regulated expression in mammalian cells. Stimulates the release of the GDP-bound but not the GTP-bound RhoB protein. Also inhibits the GDP/GTP exchange of RhoB but shows less ability to inhibit the dissociation of prebound GTP. The sequence is that of Rho GDP-dissociation inhibitor 3 (ARHGDIG) from Homo sapiens (Human).